Consider the following 335-residue polypeptide: tRNA methyltransferase 10 homolog A (335 aa).

2 disordered regions span residues 1-91 (MSSE…DRKR) and 279-335 (VPAH…PDPQ). Phosphoserine occurs at positions 22 and 24. Residues 52-62 (RLWEEQREQRK) are compositionally biased toward basic and acidic residues. A coiled-coil region spans residues 52 to 84 (RLWEEQREQRKEKRKEKRKRKKLERRCQLESNS). A compositionally biased stretch (basic residues) spans 63-75 (EKRKEKRKRKKLE). The region spanning 88–279 (DRKRIRRHVA…TILPPRKGAV (192 aa)) is the SAM-dependent MTase TRM10-type domain. A compositionally biased stretch (basic and acidic residues) spans 304-319 (EGEHGRDDPGSPHKEQ). Low complexity predominate over residues 320–335 (QGQQSSSVSAVSPDPQ). Residue S331 is modified to Phosphoserine.

The protein belongs to the class IV-like SAM-binding methyltransferase superfamily. TRM10 family. Interacts with tRNA. Ubiquitously expressed. Is more abundant in brain and pancreatic islets compared to other tissues (at protein level).

It localises to the nucleus. The protein resides in the nucleolus. The enzyme catalyses guanosine(9) in tRNA + S-adenosyl-L-methionine = N(1)-methylguanosine(9) in tRNA + S-adenosyl-L-homocysteine + H(+). S-adenosyl-L-methionine-dependent guanine N(1)-methyltransferase that catalyzes the formation of N(1)-methylguanine at position 9 (m1G9) in tRNAs. Probably not able to catalyze formation of N(1)-methyladenine at position 9 (m1A9) in tRNAs. The protein is tRNA methyltransferase 10 homolog A (Trmt10a) of Rattus norvegicus (Rat).